The sequence spans 270 residues: MRNIALRIEYDGADFVGSQWQTNGRSVQGVLEAAWQQLTGERRRMTLAGRTDAGVHARGQVANVRTDTRHTISTIVRGLNGILPEDVGVLAAWEAPDDFHARYSAVRREYRYVIDNGRTPSPLLRRHAAYVPRRLDTAAMDAVVRQVIGTHDFAPLSDGPQEGSTVRICYEARCTRTEVWGQPLVLIDIAANAFLRHMVRNLVGTLIQVGEGRIDADRFAAVLAGDDRRARVLAPAHGLYLMAVRYPEDGTGAADEPAAPHGVTETRMQL.

Asp-52 functions as the Nucleophile in the catalytic mechanism. Tyr-110 provides a ligand contact to substrate. The tract at residues 251–270 (TGAADEPAAPHGVTETRMQL) is disordered.

This sequence belongs to the tRNA pseudouridine synthase TruA family. As to quaternary structure, homodimer.

The catalysed reaction is uridine(38/39/40) in tRNA = pseudouridine(38/39/40) in tRNA. Its function is as follows. Formation of pseudouridine at positions 38, 39 and 40 in the anticodon stem and loop of transfer RNAs. The polypeptide is tRNA pseudouridine synthase A (Roseiflexus sp. (strain RS-1)).